The following is a 48-amino-acid chain: MPQLVPFYFMNQLTYGFLLMITLLILFSQFFLPMILRLYVSRLFISKL.

Residues 13–32 (LTYGFLLMITLLILFSQFFL) form a helical membrane-spanning segment.

Belongs to the ATPase protein 8 family. As to quaternary structure, F-type ATPases have 2 components, CF(1) - the catalytic core - and CF(0) - the membrane proton channel. In yeast, the dimeric form of ATP synthase consists of 17 polypeptides: alpha, beta, gamma, delta, epsilon, 4 (B), 5 (OSCP), 6 (A), 8, 9 (C), d, E (Tim11), f, g, h, i/j and k.

The protein resides in the mitochondrion membrane. Its function is as follows. Mitochondrial membrane ATP synthase (F(1)F(0) ATP synthase or Complex V) produces ATP from ADP in the presence of a proton gradient across the membrane which is generated by electron transport complexes of the respiratory chain. F-type ATPases consist of two structural domains, F(1) - containing the extramembraneous catalytic core and F(0) - containing the membrane proton channel, linked together by a central stalk and a peripheral stalk. During catalysis, ATP synthesis in the catalytic domain of F(1) is coupled via a rotary mechanism of the central stalk subunits to proton translocation. Part of the complex F(0) domain. Minor subunit located with subunit a in the membrane. This chain is ATP synthase protein 8 (ATP8), found in Saccharomyces cerevisiae (strain ATCC 204508 / S288c) (Baker's yeast).